We begin with the raw amino-acid sequence, 417 residues long: Serine hydroxymethyltransferase (417 aa).

Residues L112 and 116-118 contribute to the (6S)-5,6,7,8-tetrahydrofolate site; that span reads GHL. K221 is modified (N6-(pyridoxal phosphate)lysine). (6S)-5,6,7,8-tetrahydrofolate is bound at residue E247.

This sequence belongs to the SHMT family. Homodimer. Requires pyridoxal 5'-phosphate as cofactor.

The protein resides in the cytoplasm. It carries out the reaction (6R)-5,10-methylene-5,6,7,8-tetrahydrofolate + glycine + H2O = (6S)-5,6,7,8-tetrahydrofolate + L-serine. The protein operates within one-carbon metabolism; tetrahydrofolate interconversion. Its pathway is amino-acid biosynthesis; glycine biosynthesis; glycine from L-serine: step 1/1. Catalyzes the reversible interconversion of serine and glycine with tetrahydrofolate (THF) serving as the one-carbon carrier. This reaction serves as the major source of one-carbon groups required for the biosynthesis of purines, thymidylate, methionine, and other important biomolecules. Also exhibits THF-independent aldolase activity toward beta-hydroxyamino acids, producing glycine and aldehydes, via a retro-aldol mechanism. This is Serine hydroxymethyltransferase from Borrelia garinii subsp. bavariensis (strain ATCC BAA-2496 / DSM 23469 / PBi) (Borreliella bavariensis).